The primary structure comprises 130 residues: UPF0251 protein MmarC7_1642 (130 aa).

This sequence belongs to the UPF0251 family.

This chain is UPF0251 protein MmarC7_1642, found in Methanococcus maripaludis (strain C7 / ATCC BAA-1331).